The chain runs to 262 residues: MGPISSSWSFNKFFSIVFVVFAISGEFVAGYYRPGPWRYAHATFYGDETGGETMGGACGYGNLFNSGYGLSTAALSTTLFNDGYGCGQCFQITCSKSPHCYSGKSTVVTATNLCPPNWYQDSNAGGWCNPPRTHFDMAKPAFMKLAYWRAGIIPVAYRRVPCQRSGGMRFQFQGNSYWLLIFVMNVGGAGDIKSMAVKGSRTNWISMSHNWGASYQAFSSLYGQSLSFRVTSYTTGETIYAWNVAPANWSGGKTYKSTANFR.

The N-terminal stretch at 1-30 (MGPISSSWSFNKFFSIVFVVFAISGEFVAG) is a signal peptide. Positions 55-167 (GGACGYGNLF…RRVPCQRSGG (113 aa)) constitute an Expansin-like EG45 domain. 3 disulfides stabilise this stretch: C58–C86, C89–C162, and C94–C100. Residues 177–257 (YWLLIFVMNV…NWSGGKTYKS (81 aa)) enclose the Expansin-like CBD domain.

This sequence belongs to the expansin family. Expansin A subfamily.

Its subcellular location is the secreted. The protein resides in the cell wall. The protein localises to the membrane. Causes loosening and extension of plant cell walls by disrupting non-covalent bonding between cellulose microfibrils and matrix glucans. No enzymatic activity has been found. The polypeptide is Expansin-A7 (EXPA7) (Arabidopsis thaliana (Mouse-ear cress)).